We begin with the raw amino-acid sequence, 117 residues long: Flagellar transcriptional regulator FlhD (117 aa).

It belongs to the FlhD family. In terms of assembly, homodimer; disulfide-linked. Forms a heterohexamer composed of two FlhC and four FlhD subunits. Each FlhC binds a FlhD dimer, forming a heterotrimer, and a hexamer assembles by dimerization of two heterotrimers.

The protein localises to the cytoplasm. Functionally, functions in complex with FlhC as a master transcriptional regulator that regulates transcription of several flagellar and non-flagellar operons by binding to their promoter region. Activates expression of class 2 flagellar genes, including fliA, which is a flagellum-specific sigma factor that turns on the class 3 genes. Also regulates genes whose products function in a variety of physiological pathways. This Erwinia amylovora (strain CFBP1430) protein is Flagellar transcriptional regulator FlhD.